A 120-amino-acid chain; its full sequence is Succinate dehydrogenase assembly factor 3, mitochondrial (120 aa).

Residues 1–36 (MSRILMSQLTHPQRVRLLYKTILRLHRGLPAELRAL) constitute a mitochondrion transit peptide.

Belongs to the complex I LYR family. SDHAF3 subfamily. As to quaternary structure, interacts with SdhB within an SdhA-SdhB subcomplex.

The protein resides in the mitochondrion matrix. In terms of biological role, plays an essential role in the assembly of succinate dehydrogenase (SDH), an enzyme complex (also referred to as respiratory complex II) that is a component of both the tricarboxylic acid (TCA) cycle and the mitochondrial electron transport chain, and which couples the oxidation of succinate to fumarate with the reduction of ubiquinone (coenzyme Q) to ubiquinol. Promotes maturation of the iron-sulfur protein subunit SdhB of the SDH catalytic dimer, protecting it from the deleterious effects of oxidants. In Drosophila melanogaster (Fruit fly), this protein is Succinate dehydrogenase assembly factor 3, mitochondrial.